The sequence spans 282 residues: Bifunctional protein FolD (282 aa).

Residues 164-166 and Ser-189 contribute to the NADP(+) site; that span reads GRS.

Belongs to the tetrahydrofolate dehydrogenase/cyclohydrolase family. As to quaternary structure, homodimer.

It carries out the reaction (6R)-5,10-methylene-5,6,7,8-tetrahydrofolate + NADP(+) = (6R)-5,10-methenyltetrahydrofolate + NADPH. It catalyses the reaction (6R)-5,10-methenyltetrahydrofolate + H2O = (6R)-10-formyltetrahydrofolate + H(+). Its pathway is one-carbon metabolism; tetrahydrofolate interconversion. Functionally, catalyzes the oxidation of 5,10-methylenetetrahydrofolate to 5,10-methenyltetrahydrofolate and then the hydrolysis of 5,10-methenyltetrahydrofolate to 10-formyltetrahydrofolate. The chain is Bifunctional protein FolD from Streptococcus suis (strain 98HAH33).